The primary structure comprises 419 residues: UDP-N-acetylglucosamine 1-carboxyvinyltransferase (419 aa).

Phosphoenolpyruvate is bound at residue 22–23 (KN). Residue R91 participates in UDP-N-acetyl-alpha-D-glucosamine binding. C115 acts as the Proton donor in catalysis. C115 bears the 2-(S-cysteinyl)pyruvic acid O-phosphothioketal mark. UDP-N-acetyl-alpha-D-glucosamine is bound by residues 120–124 (RPVDL), 160–163 (KVSV), D305, and I327.

Belongs to the EPSP synthase family. MurA subfamily.

The protein resides in the cytoplasm. It catalyses the reaction phosphoenolpyruvate + UDP-N-acetyl-alpha-D-glucosamine = UDP-N-acetyl-3-O-(1-carboxyvinyl)-alpha-D-glucosamine + phosphate. It functions in the pathway cell wall biogenesis; peptidoglycan biosynthesis. Functionally, cell wall formation. Adds enolpyruvyl to UDP-N-acetylglucosamine. In Cronobacter sakazakii (strain ATCC BAA-894) (Enterobacter sakazakii), this protein is UDP-N-acetylglucosamine 1-carboxyvinyltransferase.